A 397-amino-acid polypeptide reads, in one-letter code: Elongation factor Tu (397 aa).

In terms of domain architecture, tr-type G spans 10 to 207; the sequence is KPHVNVGTIG…TLDSYIPEPV (198 aa). The interval 19 to 26 is G1; sequence GHVDHGKT. 19-26 lines the GTP pocket; that stretch reads GHVDHGKT. Residue threonine 26 coordinates Mg(2+). The segment at 60-64 is G2; sequence GITIN. The residue at position 77 (tyrosine 77) is a Phosphotyrosine. Positions 81-84 are G3; that stretch reads DCPG. 81–85 contacts GTP; sequence DCPGH. At tyrosine 88 the chain carries Phosphotyrosine. 136–139 provides a ligand contact to GTP; sequence NKAD. The segment at 136-139 is G4; it reads NKAD. Positions 174 to 176 are G5; the sequence is SAL.

It belongs to the TRAFAC class translation factor GTPase superfamily. Classic translation factor GTPase family. EF-Tu/EF-1A subfamily. Monomer.

Its subcellular location is the cytoplasm. It catalyses the reaction GTP + H2O = GDP + phosphate + H(+). Its function is as follows. GTP hydrolase that promotes the GTP-dependent binding of aminoacyl-tRNA to the A-site of ribosomes during protein biosynthesis. The polypeptide is Elongation factor Tu (Pseudomonas aeruginosa (strain UCBPP-PA14)).